The primary structure comprises 434 residues: Mitochondrial distribution and morphology protein 12 (434 aa).

The 434-residue stretch at Met-1 to Val-434 folds into the SMP-LTD domain. Residues Tyr-70–Glu-83 show a composition bias toward acidic residues. Disordered regions lie at residues Tyr-70–Pro-141 and Thr-181–Arg-277. Residues Ser-86–Ser-97 show a composition bias toward basic and acidic residues. Positions Ser-215–Ser-237 are enriched in polar residues.

It belongs to the MDM12 family. Component of the ER-mitochondria encounter structure (ERMES) or MDM complex, composed of MMM1, MDM10, MDM12 and MDM34. An MMM1 homodimer associates with one molecule of MDM12 on each side in a pairwise head-to-tail manner, and the SMP-LTD domains of MMM1 and MDM12 generate a continuous hydrophobic tunnel for phospholipid trafficking.

It is found in the mitochondrion outer membrane. The protein resides in the endoplasmic reticulum membrane. In terms of biological role, component of the ERMES/MDM complex, which serves as a molecular tether to connect the endoplasmic reticulum (ER) and mitochondria. Components of this complex are involved in the control of mitochondrial shape and protein biogenesis, and function in nonvesicular lipid trafficking between the ER and mitochondria. MDM12 is required for the interaction of the ER-resident membrane protein MMM1 and the outer mitochondrial membrane-resident beta-barrel protein MDM10. The MDM12-MMM1 subcomplex functions in the major beta-barrel assembly pathway that is responsible for biogenesis of all mitochondrial outer membrane beta-barrel proteins, and acts in a late step after the SAM complex. The MDM10-MDM12-MMM1 subcomplex further acts in the TOM40-specific pathway after the action of the MDM12-MMM1 complex. Essential for establishing and maintaining the structure of mitochondria and maintenance of mtDNA nucleoids. In Ajellomyces dermatitidis (strain ER-3 / ATCC MYA-2586) (Blastomyces dermatitidis), this protein is Mitochondrial distribution and morphology protein 12.